Here is a 533-residue protein sequence, read N- to C-terminus: Decreased expression in renal and prostate cancer protein (533 aa).

Residues 1-12 are compositionally biased toward basic and acidic residues; sequence MKEPRIFPRERP. Disordered regions lie at residues 1 to 31, 67 to 164, 177 to 259, and 299 to 350; these read MKEP…GGPV, QNPS…PDPR, MRAG…RAGG, and ASGN…PNSA. At S160 the chain carries Phosphoserine. The segment covering 299–309 has biased composition (polar residues); that stretch reads ASGNMGTNPPT. R368 bears the Asymmetric dimethylarginine mark. At R396 the chain carries Omega-N-methylarginine. At S432 the chain carries Phosphoserine.

Belongs to the DERPC family.

The protein resides in the nucleus. Functionally, potential tumor suppressor. The chain is Decreased expression in renal and prostate cancer protein from Mus musculus (Mouse).